A 440-amino-acid polypeptide reads, in one-letter code: NADH-quinone oxidoreductase subunit D 2 (440 aa).

Belongs to the complex I 49 kDa subunit family. NDH-1 is composed of 14 different subunits. Subunits NuoB, C, D, E, F, and G constitute the peripheral sector of the complex.

It is found in the cell membrane. It carries out the reaction a quinone + NADH + 5 H(+)(in) = a quinol + NAD(+) + 4 H(+)(out). NDH-1 shuttles electrons from NADH, via FMN and iron-sulfur (Fe-S) centers, to quinones in the respiratory chain. The immediate electron acceptor for the enzyme in this species is believed to be a menaquinone. Couples the redox reaction to proton translocation (for every two electrons transferred, four hydrogen ions are translocated across the cytoplasmic membrane), and thus conserves the redox energy in a proton gradient. The chain is NADH-quinone oxidoreductase subunit D 2 from Streptomyces coelicolor (strain ATCC BAA-471 / A3(2) / M145).